Consider the following 464-residue polypeptide: Soluble pyridine nucleotide transhydrogenase (464 aa).

FAD is bound at residue 35–44; the sequence is EDKSQVGGNC.

The protein belongs to the class-I pyridine nucleotide-disulfide oxidoreductase family. The cofactor is FAD.

The protein resides in the cytoplasm. The catalysed reaction is NAD(+) + NADPH = NADH + NADP(+). Its function is as follows. Conversion of NADPH, generated by peripheral catabolic pathways, to NADH, which can enter the respiratory chain for energy generation. The chain is Soluble pyridine nucleotide transhydrogenase from Hahella chejuensis (strain KCTC 2396).